Consider the following 156-residue polypeptide: Snaclec A4 (156 aa).

The signal sequence occupies residues 1 to 23 (MGRSISVSFGLLVVFLSLSGTGA). Cysteines 27 and 38 form a disulfide. The region spanning 34–155 (HEGHCYKVFN…CGQPYRFTCE (122 aa)) is the C-type lectin domain. N-linked (GlcNAc...) asparagine glycosylation occurs at N45. 2 disulfides stabilise this stretch: C55–C154 and C129–C146.

This sequence belongs to the snaclec family. In terms of assembly, heterodimer; disulfide-linked. As to expression, expressed by the venom gland.

The protein resides in the secreted. Its function is as follows. Interferes with one step of hemostasis (modulation of platelet aggregation, or coagulation cascade, for example). This chain is Snaclec A4, found in Macrovipera lebetinus (Levantine viper).